Consider the following 674-residue polypeptide: UvrABC system protein B (674 aa).

The region spanning 26–183 (EGLEDGLAHQ…RRLAELQYTR (158 aa)) is the Helicase ATP-binding domain. 39 to 46 (GVTGSGKT) is an ATP binding site. The Beta-hairpin motif lies at 92-115 (YYDYYQPEAYVPSSDTFIEKDASV). The Helicase C-terminal domain maps to 431–597 (QVDDLLSEIR…GLNKKISDIL (167 aa)). Residues 634–669 (QKRIHQLEAQMQQHAQNLEFEEAAQVRDQLHQVREL) enclose the UVR domain.

The protein belongs to the UvrB family. As to quaternary structure, forms a heterotetramer with UvrA during the search for lesions. Interacts with UvrC in an incision complex.

It is found in the cytoplasm. Functionally, the UvrABC repair system catalyzes the recognition and processing of DNA lesions. A damage recognition complex composed of 2 UvrA and 2 UvrB subunits scans DNA for abnormalities. Upon binding of the UvrA(2)B(2) complex to a putative damaged site, the DNA wraps around one UvrB monomer. DNA wrap is dependent on ATP binding by UvrB and probably causes local melting of the DNA helix, facilitating insertion of UvrB beta-hairpin between the DNA strands. Then UvrB probes one DNA strand for the presence of a lesion. If a lesion is found the UvrA subunits dissociate and the UvrB-DNA preincision complex is formed. This complex is subsequently bound by UvrC and the second UvrB is released. If no lesion is found, the DNA wraps around the other UvrB subunit that will check the other stand for damage. The chain is UvrABC system protein B from Erwinia tasmaniensis (strain DSM 17950 / CFBP 7177 / CIP 109463 / NCPPB 4357 / Et1/99).